The primary structure comprises 549 residues: Longitudinals lacking protein, isoforms H/M/V (549 aa).

In terms of domain architecture, BTB spans 32 to 97; sequence VDCTLAAEGK…MYRGEVNISQ (66 aa). Disordered stretches follow at residues 115–200 and 228–340; these read LSDN…SSVL and SSGP…ASAS. Low complexity-rich tracts occupy residues 162 to 175, 228 to 251, 263 to 293, and 329 to 340; these read SGDVSGSREGSSSP, SSGPAAGTSSQASSTQQQQPLTST, TSSTAAPASGASASAAVQQAHLHQQQAQTTS, and NSATGPNPASAS.

Mostly neuronal.

It localises to the nucleus. Its function is as follows. Putative transcription factor required for axon growth and guidance in the central and peripheral nervous systems. Repels CNS axons away from the midline by promoting the expression of the midline repellent sli and its receptor robo. This Drosophila melanogaster (Fruit fly) protein is Longitudinals lacking protein, isoforms H/M/V.